Consider the following 154-residue polypeptide: MGLSDQEWQHVLTIWGKVESDLAGHGHQVLMRLFQDHPETLDRFEKFKGLKTPDQMKGSEDLKKHGVTVLTQLGKILKQKGNHESELKPLAQTHATKHKIPVKYLEFISEAIIKVIAEKHASSFGADSQAAMKKALELFRNDMASKYKEFGFQG.

The Globin domain occupies 2 to 148; sequence GLSDQEWQHV…FRNDMASKYK (147 aa). A nitrite-binding site is contributed by His-65. His-65 is an O2 binding site. Position 94 (His-94) interacts with heme b.

The protein belongs to the globin family. As to quaternary structure, monomeric.

It localises to the cytoplasm. The protein localises to the sarcoplasm. The enzyme catalyses Fe(III)-heme b-[protein] + nitric oxide + H2O = Fe(II)-heme b-[protein] + nitrite + 2 H(+). The catalysed reaction is H2O2 + AH2 = A + 2 H2O. Monomeric heme protein which primary function is to store oxygen and facilitate its diffusion within muscle tissues. Reversibly binds oxygen through a pentacoordinated heme iron and enables its timely and efficient release as needed during periods of heightened demand. Depending on the oxidative conditions of tissues and cells, and in addition to its ability to bind oxygen, it also has a nitrite reductase activity whereby it regulates the production of bioactive nitric oxide. Under stress conditions, like hypoxia and anoxia, it also protects cells against reactive oxygen species thanks to its pseudoperoxidase activity. The sequence is that of Myoglobin (MB) from Uria lomvia (Thick-billed murre).